A 439-amino-acid polypeptide reads, in one-letter code: Methylenetetrahydrofolate--tRNA-(uracil-5-)-methyltransferase TrmFO (439 aa).

Residue 8 to 13 coordinates FAD; it reads GAGLAG.

It belongs to the MnmG family. TrmFO subfamily. FAD is required as a cofactor.

It is found in the cytoplasm. It catalyses the reaction uridine(54) in tRNA + (6R)-5,10-methylene-5,6,7,8-tetrahydrofolate + NADH + H(+) = 5-methyluridine(54) in tRNA + (6S)-5,6,7,8-tetrahydrofolate + NAD(+). The enzyme catalyses uridine(54) in tRNA + (6R)-5,10-methylene-5,6,7,8-tetrahydrofolate + NADPH + H(+) = 5-methyluridine(54) in tRNA + (6S)-5,6,7,8-tetrahydrofolate + NADP(+). In terms of biological role, catalyzes the folate-dependent formation of 5-methyl-uridine at position 54 (M-5-U54) in all tRNAs. This Lacticaseibacillus paracasei (strain ATCC 334 / BCRC 17002 / CCUG 31169 / CIP 107868 / KCTC 3260 / NRRL B-441) (Lactobacillus paracasei) protein is Methylenetetrahydrofolate--tRNA-(uracil-5-)-methyltransferase TrmFO.